The chain runs to 221 residues: Sigma non-opioid intracellular receptor 1 (221 aa).

The Lumenal portion of the chain corresponds to 1–4 (MALW). Residues 5 to 27 (RGLRAVLAVAGLAVAVQLLRGWL) form a helical membrane-spanning segment. Over 28 to 221 (GSKSYVFNRE…STHLSELGFF (194 aa)) the chain is Cytoplasmic. The interval 96 to 103 (SLTEYVLL) is important for ligand-binding. Residues 174–221 (FIPSTLGFALADTIFSTQDFLTLFYTVKVYGKALLLETSTHLSELGFF) form a C-terminal hydrophobic region region.

The protein belongs to the ERG2 family. As to quaternary structure, homotrimer.

Its subcellular location is the nucleus inner membrane. The protein resides in the nucleus outer membrane. It is found in the nucleus envelope. The protein localises to the cytoplasmic vesicle. It localises to the endoplasmic reticulum membrane. Its subcellular location is the membrane. Functionally, may function in lipid transport from the endoplasmic reticulum and be involved in a wide array of cellular functions probably through regulation of the biogenesis of lipid microdomains at the plasma membrane. May regulate calcium efflux at the endoplasmic reticulum. This chain is Sigma non-opioid intracellular receptor 1 (sigmar1), found in Xenopus tropicalis (Western clawed frog).